The sequence spans 391 residues: Probable acridone synthase 3 (391 aa).

Residue Cys-164 is part of the active site.

Belongs to the thiolase-like superfamily. Chalcone/stilbene synthases family.

The enzyme catalyses N-methylanthraniloyl-CoA + 3 malonyl-CoA + 3 H(+) = 1,3-dihydroxy-N-methylacridone + 3 CO2 + 4 CoA + H2O. The chain is Probable acridone synthase 3 (ACS3) from Ruta graveolens (Common rue).